The chain runs to 172 residues: Ribosome maturation factor RimM (172 aa).

Residues 96-168 enclose the PRC barrel domain; the sequence is EGEFYYHQII…RVDVELMEGL (73 aa).

It belongs to the RimM family. Binds ribosomal protein uS19.

It is found in the cytoplasm. Functionally, an accessory protein needed during the final step in the assembly of 30S ribosomal subunit, possibly for assembly of the head region. Essential for efficient processing of 16S rRNA. May be needed both before and after RbfA during the maturation of 16S rRNA. It has affinity for free ribosomal 30S subunits but not for 70S ribosomes. This Streptococcus pyogenes serotype M18 (strain MGAS8232) protein is Ribosome maturation factor RimM.